Reading from the N-terminus, the 72-residue chain is Peptide Ctri9194 (72 aa).

The first 23 residues, 1–23, serve as a signal peptide directing secretion; it reads MKTQNVLLSFGIVFLMISFSSET. Isoleucine amide is present on I38. The propeptide occupies 42–72; that stretch reads SLKDVESLDFLFDPTFTAADLAVLENALEDY.

This sequence belongs to the non-disulfide-bridged peptide (NDBP) superfamily. Short antimicrobial peptide (group 4) family. Expressed by the venom gland.

The protein resides in the secreted. Its function is as follows. Antimicrobial peptide. In Chaerilus tricostatus (Scorpion), this protein is Peptide Ctri9194.